A 170-amino-acid chain; its full sequence is Copper transporter 1 (170 aa).

The tract at residues 1–29 (MDHDHMHGMPRPSSSSSSSPSSMMNNGSM) is disordered. Low complexity predominate over residues 9–29 (MPRPSSSSSSSPSSMMNNGSM). 2 helical membrane passes run 65 to 85 (GMYALCLIFVFFLAVLTEWLA) and 114 to 134 (IGLAYLVMLAVMSFNAGVFLV).

It belongs to the copper transporter (Ctr) (TC 1.A.56) family. SLC31A subfamily. Expressed in the root apex, lateral root primordia, embryo, trichomes, guard cells and pollen grains.

The protein localises to the membrane. Functionally, copper transporter involved in copper acquisition and transport in leaves. Required for copper homeostasis and normal plant growth and development. This is Copper transporter 1 (COPT1) from Arabidopsis thaliana (Mouse-ear cress).